Consider the following 292-residue polypeptide: 2,3-dihydroxybenzoate decarboxylase (292 aa).

Cys263 is a catalytic residue.

Belongs to the metallo-dependent hydrolases superfamily. As to quaternary structure, homotetramer.

It carries out the reaction 2,3-dihydroxybenzoate + H(+) = catechol + CO2. It participates in aromatic compound metabolism; benzoate degradation via hydroxylation. This Aspergillus niger protein is 2,3-dihydroxybenzoate decarboxylase.